The primary structure comprises 805 residues: Phenylalanine--tRNA ligase beta subunit (805 aa).

In terms of domain architecture, tRNA-binding spans 39-155 (VKVLGAFRIC…EDAPMGMRFI (117 aa)). The B5 domain maps to 408–479 (DTSRAYRFDP…RVASLTKLQG (72 aa)). Residues D457, D463, E466, and E467 each coordinate Mg(2+). Residues 707 to 804 (SDLQAVERDF…VAKATGATLR (98 aa)) enclose the FDX-ACB domain.

Belongs to the phenylalanyl-tRNA synthetase beta subunit family. Type 1 subfamily. In terms of assembly, tetramer of two alpha and two beta subunits. Requires Mg(2+) as cofactor.

The protein localises to the cytoplasm. It catalyses the reaction tRNA(Phe) + L-phenylalanine + ATP = L-phenylalanyl-tRNA(Phe) + AMP + diphosphate + H(+). This Cereibacter sphaeroides (strain ATCC 17023 / DSM 158 / JCM 6121 / CCUG 31486 / LMG 2827 / NBRC 12203 / NCIMB 8253 / ATH 2.4.1.) (Rhodobacter sphaeroides) protein is Phenylalanine--tRNA ligase beta subunit.